The sequence spans 358 residues: Magnesium-protoporphyrin IX monomethyl ester [oxidative] cyclase 1 (358 aa).

It belongs to the AcsF family. Fe cation serves as cofactor.

The enzyme catalyses Mg-protoporphyrin IX 13-monomethyl ester + 3 NADPH + 3 O2 + 2 H(+) = 3,8-divinyl protochlorophyllide a + 3 NADP(+) + 5 H2O. Its pathway is porphyrin-containing compound metabolism; chlorophyll biosynthesis (light-independent). In terms of biological role, catalyzes the formation of the isocyclic ring in chlorophyll biosynthesis. Mediates the cyclase reaction, which results in the formation of divinylprotochlorophyllide (Pchlide) characteristic of all chlorophylls from magnesium-protoporphyrin IX 13-monomethyl ester (MgPMME). The protein is Magnesium-protoporphyrin IX monomethyl ester [oxidative] cyclase 1 of Synechocystis sp. (strain ATCC 27184 / PCC 6803 / Kazusa).